The chain runs to 183 residues: Early E3 20.2 kDa glycoprotein (183 aa).

N-linked (GlcNAc...) asparagine; by host glycans are attached at residues Asn-30, Asn-73, Asn-117, Asn-134, and Asn-135.

This sequence belongs to the adenoviridae E3_20 family.

The chain is Early E3 20.2 kDa glycoprotein from Homo sapiens (Human).